A 1231-amino-acid chain; its full sequence is Alpha-protein kinase 1 (1231 aa).

ADP-D-glycero-beta-D-manno-heptose-binding positions include Phe-61, Gln-67, Arg-116, 150 to 153 (RQAR), Asp-231, Lys-233, 236 to 237 (ST), and Phe-295. Disordered stretches follow at residues 508-540 (ERVS…RSWT), 609-637 (GSGQ…SSRA), 692-739 (GSNN…GDVP), 767-791 (TFAP…SPSQ), 811-843 (PDGS…DEEG), and 859-888 (AHRP…PIFD). The span at 509–522 (RVSSQDSRSTASSK) shows a compositional bias: polar residues. The segment covering 524–537 (SKKDQGKLQRERGR) has biased composition (basic and acidic residues). Positions 700–714 (SSHSCGSDSWSLSSS) are enriched in low complexity. Positions 775-784 (PEGETAESTD) are enriched in acidic residues. Residues 1003–1223 (KYSKKSELWT…ICHRLSLTRP (221 aa)) form the Alpha-type protein kinase domain.

This sequence belongs to the protein kinase superfamily. Alpha-type protein kinase family. ALPK subfamily. In terms of tissue distribution, widely expressed. Expressed in the retina and in sweat glands, especially in the myoepithelial cells.

It is found in the cytoplasm. Its subcellular location is the cytosol. The protein localises to the cytoskeleton. The protein resides in the spindle pole. It localises to the microtubule organizing center. It is found in the centrosome. Its subcellular location is the cell projection. The protein localises to the cilium. The enzyme catalyses L-seryl-[protein] + ATP = O-phospho-L-seryl-[protein] + ADP + H(+). It carries out the reaction L-threonyl-[protein] + ATP = O-phospho-L-threonyl-[protein] + ADP + H(+). With respect to regulation, serine/threonine-protein kinase activity is stimulated upon ADP-D-glycero-beta-D-manno-heptose (ADP-Heptose)-binding. Serine/threonine-protein kinase that detects bacterial pathogen-associated molecular pattern metabolites (PAMPs) and initiates an innate immune response, a critical step for pathogen elimination and engagement of adaptive immunity. Specifically recognizes and binds ADP-D-glycero-beta-D-manno-heptose (ADP-Heptose), a potent PAMP present in all Gram-negative and some Gram-positive bacteria. ADP-Heptose-binding stimulates its kinase activity to phosphorylate and activate TIFA, triggering pro-inflammatory NF-kappa-B signaling. May be involved in monosodium urate monohydrate (MSU)-induced inflammation by mediating phosphorylation of unconventional myosin MYO9A. May also play a role in apical protein transport by mediating phosphorylation of unconventional myosin MYO1A. May play a role in ciliogenesis. This Mus musculus (Mouse) protein is Alpha-protein kinase 1.